The following is a 597-amino-acid chain: Blastula protease 10 (597 aa).

An N-terminal signal peptide occupies residues Met1–Cys16. Residues Thr17–Lys93 constitute a propeptide, activation peptide. The tract at residues Asp24–Asp67 is disordered. One can recognise a Peptidase M12A domain in the interval Lys93–Asp294. 9 disulfides stabilise this stretch: Cys134–Cys293, Cys162–Cys182, Cys299–Cys315, Cys305–Cys317, Cys319–Cys328, Cys339–Cys365, Cys392–Cys412, Cys484–Cys510, and Cys537–Cys557. His190 is a binding site for Zn(2+). Glu191 is an active-site residue. His194 and His200 together coordinate Zn(2+). The EGF-like domain occupies Asp295 to Glu329. CUB domains are found at residues Cys339–Val449 and Cys484–Ile595.

The cofactor is Zn(2+).

Its subcellular location is the cytoplasm. It localises to the perinuclear region. The protein localises to the cell cortex. The protein resides in the secreted. It is found in the extracellular space. Its function is as follows. Could be involved in the differentiation of ectodermal lineages and subsequent patterning of the embryo. The chain is Blastula protease 10 (BP10) from Paracentrotus lividus (Common sea urchin).